The primary structure comprises 251 residues: Triosephosphate isomerase (251 aa).

9–11 (NWK) lines the substrate pocket. The Electrophile role is filled by His96. Glu168 serves as the catalytic Proton acceptor. Substrate is bound by residues Gly174, Ser214, and 235–236 (GG).

The protein belongs to the triosephosphate isomerase family. In terms of assembly, homodimer.

The protein localises to the cytoplasm. The catalysed reaction is D-glyceraldehyde 3-phosphate = dihydroxyacetone phosphate. It functions in the pathway carbohydrate biosynthesis; gluconeogenesis. It participates in carbohydrate degradation; glycolysis; D-glyceraldehyde 3-phosphate from glycerone phosphate: step 1/1. Functionally, involved in the gluconeogenesis. Catalyzes stereospecifically the conversion of dihydroxyacetone phosphate (DHAP) to D-glyceraldehyde-3-phosphate (G3P). The polypeptide is Triosephosphate isomerase (Cytophaga hutchinsonii (strain ATCC 33406 / DSM 1761 / CIP 103989 / NBRC 15051 / NCIMB 9469 / D465)).